The following is a 233-amino-acid chain: Outer membrane protein MIP (233 aa).

Positions 1–20 (MKMKLVTAAVMGLAMSTAMA) are cleaved as a signal peptide. The PPIase FKBP-type domain maps to 144–233 (SDTVTVEYTG…IHLISVKKSS (90 aa)).

This sequence belongs to the FKBP-type PPIase family.

Its subcellular location is the cell outer membrane. The catalysed reaction is [protein]-peptidylproline (omega=180) = [protein]-peptidylproline (omega=0). Functionally, essential virulence factor associated with macrophage infectivity. Exhibits PPIase activity. The chain is Outer membrane protein MIP (mip) from Legionella pneumophila (strain Corby).